The chain runs to 314 residues: MSKFARIIGTGSYLPPTVITNDDLSKTINTTNEWIVARTGIKQRHKVTNETTCDLAEKAANRALEMAGINVKDLDLIILATTTADKIFPATATILQTAIGASCPAFDLQSVCAGFIFALTTAEQYIKASAANKVLVVGSETLSRIVNWNDRSTAVLFGDGAGAVVLSGSDNTGILYSKLFSDGNYLSSLQVSNNYINEVGFIEMSGNEVFKIAVNRLSSLAEKTLKETNLNSNKLDWIVPHQANIRIISAVAKRIKTPMNKVIVTLENHGNTSAASIPLALDTAVRDGRIKRGDHLLFEGIGAGFSWGSILIQF.

Catalysis depends on residues Cys112 and His241. The segment at 242 to 246 (QANIR) is ACP-binding. Residue Asn271 is part of the active site.

The protein belongs to the thiolase-like superfamily. FabH family. Homodimer.

The protein resides in the cytoplasm. It carries out the reaction malonyl-[ACP] + acetyl-CoA + H(+) = 3-oxobutanoyl-[ACP] + CO2 + CoA. It participates in lipid metabolism; fatty acid biosynthesis. Catalyzes the condensation reaction of fatty acid synthesis by the addition to an acyl acceptor of two carbons from malonyl-ACP. Catalyzes the first condensation reaction which initiates fatty acid synthesis and may therefore play a role in governing the total rate of fatty acid production. Possesses both acetoacetyl-ACP synthase and acetyl transacylase activities. Its substrate specificity determines the biosynthesis of branched-chain and/or straight-chain of fatty acids. The chain is Beta-ketoacyl-[acyl-carrier-protein] synthase III from Vesicomyosocius okutanii subsp. Calyptogena okutanii (strain HA).